The following is a 134-amino-acid chain: Mini-ribonuclease 3 (134 aa).

D23 is a catalytic residue.

The protein belongs to the MrnC RNase family. As to quaternary structure, homodimer. Mg(2+) serves as cofactor.

It localises to the cytoplasm. Its function is as follows. Involved in correct processing of both the 5' and 3' ends of 23S rRNA precursor. Processes 30S rRNA precursor transcript even in absence of ribonuclease 3 (Rnc); Rnc processes 30S rRNA into smaller rRNA precursors. The chain is Mini-ribonuclease 3 from Brevibacillus brevis (strain 47 / JCM 6285 / NBRC 100599).